An 863-amino-acid polypeptide reads, in one-letter code: Paramyosin (863 aa).

A nonhelical region region spans residues Met-1 to Pro-18. A coiled-coil region spans residues Ser-19–Ile-836. The tract at residues Gly-837–Met-863 is nonhelical region.

This sequence belongs to the paramyosin family. In terms of assembly, homodimer.

The protein resides in the cytoplasm. It localises to the myofibril. Paramyosin is a major structural component of many thick filaments isolated from invertebrate muscles. This is Paramyosin (PMY) from Taenia saginata (Beef tapeworm).